Consider the following 263-residue polypeptide: Small ribosomal subunit protein eS4 (263 aa).

The region spanning 42–104 (LPLVIFLRNR…TNELFRLIYD (63 aa)) is the S4 RNA-binding domain.

This sequence belongs to the eukaryotic ribosomal protein eS4 family.

This is Small ribosomal subunit protein eS4 (RpS4) from Bombyx mori (Silk moth).